The chain runs to 253 residues: Ribonuclease HII (253 aa).

The 184-residue stretch at 70-253 (NLIAGIDEVG…KSFEPIKSML (184 aa)) folds into the RNase H type-2 domain. Residues Asp76, Glu77, and Asp168 each coordinate a divalent metal cation.

Belongs to the RNase HII family. The cofactor is Mn(2+). Mg(2+) is required as a cofactor.

The protein localises to the cytoplasm. It carries out the reaction Endonucleolytic cleavage to 5'-phosphomonoester.. In terms of biological role, endonuclease that specifically degrades the RNA of RNA-DNA hybrids. This Streptococcus agalactiae serotype Ia (strain ATCC 27591 / A909 / CDC SS700) protein is Ribonuclease HII.